Reading from the N-terminus, the 276-residue chain is MAIRVYKPTTAGRRNASVSDFSELTRSTPEKSLVRKKSKTGGRNSYGRITSRHRGGGHKRQYRLIDFKRWDKDGVPAKVAEIEYDPNRSARIALLHFADGEKRYIIAPKGIKQGDVIETGAQADIKPGNNLPLKNIPTGTVVHAIELRPLGGAKIARSAGAAVQLVAKDGAYAQLRMPSGEIRNVDARCRATVGEVGNEDHANIQLGKAGRARWIGRRPITRGESMNPVDHPHGGRTRGGKPPVSPWGKGEVRTRRPKKASNKMIVRRRPSGKNRK.

Disordered stretches follow at residues 14-58 and 219-276; these read RNAS…GGGH and PITR…KNRK. Positions 16-27 are enriched in polar residues; the sequence is ASVSDFSELTRS. A compositionally biased stretch (basic residues) spans 255–276; sequence RRPKKASNKMIVRRRPSGKNRK.

Belongs to the universal ribosomal protein uL2 family. In terms of assembly, part of the 50S ribosomal subunit. Forms a bridge to the 30S subunit in the 70S ribosome.

Functionally, one of the primary rRNA binding proteins. Required for association of the 30S and 50S subunits to form the 70S ribosome, for tRNA binding and peptide bond formation. It has been suggested to have peptidyltransferase activity; this is somewhat controversial. Makes several contacts with the 16S rRNA in the 70S ribosome. This is Large ribosomal subunit protein uL2 from Bifidobacterium longum (strain DJO10A).